Here is a 188-residue protein sequence, read N- to C-terminus: Acireductone dioxygenase (188 aa).

Fe(2+) is bound by residues His-97, His-99, Glu-103, and His-141. 4 residues coordinate Ni(2+): His-97, His-99, Glu-103, and His-141.

Belongs to the acireductone dioxygenase (ARD) family. Monomer. Fe(2+) serves as cofactor. Requires Ni(2+) as cofactor.

The catalysed reaction is 1,2-dihydroxy-5-(methylsulfanyl)pent-1-en-3-one + O2 = 3-(methylsulfanyl)propanoate + CO + formate + 2 H(+). It catalyses the reaction 1,2-dihydroxy-5-(methylsulfanyl)pent-1-en-3-one + O2 = 4-methylsulfanyl-2-oxobutanoate + formate + 2 H(+). It functions in the pathway amino-acid biosynthesis; L-methionine biosynthesis via salvage pathway; L-methionine from S-methyl-5-thio-alpha-D-ribose 1-phosphate: step 5/6. In terms of biological role, catalyzes 2 different reactions between oxygen and the acireductone 1,2-dihydroxy-3-keto-5-methylthiopentene (DHK-MTPene) depending upon the metal bound in the active site. Fe-containing acireductone dioxygenase (Fe-ARD) produces formate and 2-keto-4-methylthiobutyrate (KMTB), the alpha-ketoacid precursor of methionine in the methionine recycle pathway. Ni-containing acireductone dioxygenase (Ni-ARD) produces methylthiopropionate, carbon monoxide and formate, and does not lie on the methionine recycle pathway. This chain is Acireductone dioxygenase, found in Xylella fastidiosa (strain M23).